The primary structure comprises 277 residues: MDPILALKAIIMGIVEGFTEFLPISSTGHLILAGSLLDFTGPKVKVFEIAIQTGAMLAVVWEYRAKIAAVLGGLLTERKAQKFALNIIIAFLPAALLGLVFASKIKEKLFAPVPVAIAFIVGGFIILWIEKRNRNTDFVARVETVDDMTMLDALKVGCAQAFALIPGTSRSGASIIGGMFFGLSRKAATEFSFFLAIPTLMGATVYSVYKDRALLSMADIPLFGLGGFAAFVSAFLCVRWLLRYISTHDFTFFAYYRIVFGLFVLLSAYYGWVVWAD.

5 helical membrane-spanning segments follow: residues 83–103 (FALN…VFAS), 109–129 (LFAP…ILWI), 188–208 (ATEF…VYSV), 218–238 (ADIP…FLCV), and 256–276 (YRIV…VVWA).

This sequence belongs to the UppP family.

The protein resides in the cell inner membrane. The catalysed reaction is di-trans,octa-cis-undecaprenyl diphosphate + H2O = di-trans,octa-cis-undecaprenyl phosphate + phosphate + H(+). Functionally, catalyzes the dephosphorylation of undecaprenyl diphosphate (UPP). Confers resistance to bacitracin. The sequence is that of Undecaprenyl-diphosphatase from Janthinobacterium sp. (strain Marseille) (Minibacterium massiliensis).